The chain runs to 907 residues: Eukaryotic translation initiation factor 4 gamma 2 (907 aa).

An N-acetylmethionine modification is found at M1. The disordered stretch occupies residues 1-71; sequence MESAIAEGGA…SAANNSANEK (71 aa). S11 is subject to Phosphoserine. One can recognise an MIF4G domain in the interval 78 to 308; it reads FRKVRGILNK…QDTVELREHH (231 aa). Phosphothreonine is present on T89. R360 is modified (omega-N-methylarginine). The residue at position 395 (S395) is a Phosphoserine. K431 bears the N6-methyllysine mark. S443 carries the phosphoserine modification. The segment at 498 to 541 is disordered; it reads PPSAQPPRTQTPPLGQTPQLGLKTNPPLIQEKPAKTSKKPPPSK. The span at 503-516 shows a compositional bias: polar residues; it reads PPRTQTPPLGQTPQ. An Omega-N-methylarginine modification is found at R505. Phosphothreonine is present on residues T508 and T514. One can recognise an MI domain in the interval 543–666; sequence ELLKLTETVV…SISELAQPLE (124 aa). K575 participates in a covalent cross-link: Glycyl lysine isopeptide (Lys-Gly) (interchain with G-Cter in SUMO2). The W2 domain maps to 720 to 904; that stretch reads EGKGLSFLFP…ETAEEEESEE (185 aa). S902 is modified (phosphoserine).

Belongs to the eukaryotic initiation factor 4G family. In terms of assembly, interacts with the serine/threonine protein kinases MKNK1 and MKNK2. Binds EIF4A and EIF3. Interacts with MIF4GD. Interacts with DAZAP2. In terms of processing, phosphorylation; hyperphosphorylated during mitosis.

In terms of biological role, appears to play a role in the switch from cap-dependent to IRES-mediated translation during mitosis, apoptosis and viral infection. Cleaved by some caspases and viral proteases. The sequence is that of Eukaryotic translation initiation factor 4 gamma 2 from Oryctolagus cuniculus (Rabbit).